The sequence spans 251 residues: Fibroblast growth factor-binding protein 1 (251 aa).

The signal sequence occupies residues 1–20; sequence MRLHSLILLSFLLLATQAFS. The interval 25 to 62 is disordered; sequence KRAKNAPHSTAEEGVEGSAPSLGKAQNKQRSRTSKSLT. Cystine bridges form between Cys74/Cys91, Cys100/Cys133, and Cys109/Cys145. Positions 160–189 are disordered; that stretch reads NARGNTKPRKEKAEVSAREHNKVQEAVSTE. Basic and acidic residues predominate over residues 170 to 182; sequence EKAEVSAREHNKV. Ser175 is a glycosylation site (O-linked (GalNAc...) serine). A sufficient for interaction with FGF2 and FGF2-induced effects region spans residues 210–251; that stretch reads RDPECLEDPDVLNQRKTALEFCGESWSSICTFFLNMLQATSC. 2 disulfide bridges follow: Cys214-Cys251 and Cys231-Cys239.

The protein belongs to the fibroblast growth factor-binding protein family. As to quaternary structure, found in a complex with FGFBP1, FGF1 and FGF2. Interacts with FGF1, FGF7, FGF10, FGF22 and HSPG2. Interacts with FGF2. Expressed in intestine, ovary, lung, placenta and normal and wounded skin.

It is found in the secreted. The protein resides in the extracellular space. Its subcellular location is the cell membrane. Functionally, acts as a carrier protein that releases fibroblast-binding factors (FGFs) from the extracellular matrix (EM) storage and thus enhances the mitogenic activity of FGFs. Enhances FGF2 signaling during tissue repair, angiogenesis and in tumor growth. The sequence is that of Fibroblast growth factor-binding protein 1 (Fgfbp1) from Mus musculus (Mouse).